The sequence spans 377 residues: tRNA-specific 2-thiouridylase MnmA (377 aa).

Residues 18–25 (GMSGGVDS) and Met-44 each bind ATP. An interaction with target base in tRNA region spans residues 104–106 (NPD). Residue Cys-109 is the Nucleophile of the active site. A disulfide bond links Cys-109 and Cys-209. Residue Gly-134 coordinates ATP. Residues 159–161 (KDQ) form an interaction with tRNA region. Cys-209 (cysteine persulfide intermediate) is an active-site residue. Positions 324–325 (RY) are interaction with tRNA.

Belongs to the MnmA/TRMU family.

The protein localises to the cytoplasm. The enzyme catalyses S-sulfanyl-L-cysteinyl-[protein] + uridine(34) in tRNA + AH2 + ATP = 2-thiouridine(34) in tRNA + L-cysteinyl-[protein] + A + AMP + diphosphate + H(+). Its function is as follows. Catalyzes the 2-thiolation of uridine at the wobble position (U34) of tRNA, leading to the formation of s(2)U34. The chain is tRNA-specific 2-thiouridylase MnmA from Photobacterium profundum (strain SS9).